Here is a 745-residue protein sequence, read N- to C-terminus: Inhibitor of nuclear factor kappa-B kinase subunit alpha (745 aa).

A Protein kinase domain is found at 15–300 (WEMRERLGTG…IDLTLKQPRC (286 aa)). ATP is bound by residues 21 to 29 (LGTGGFGNV) and K44. T23 is modified (phosphothreonine; by PKB/AKT1 and SGK1). Catalysis depends on D144, which acts as the Proton acceptor. S176 bears the Phosphoserine; by MAP3K14 mark. S180 bears the Phosphoserine; by SGK1 mark. Residues 455–476 (LLRYNANLTKMKNTLISASQQL) form a leucine-zipper region. An NEMO-binding region spans residues 738–743 (LDWSWL).

It belongs to the protein kinase superfamily. Ser/Thr protein kinase family. I-kappa-B kinase subfamily. As to quaternary structure, component of the I-kappa-B-kinase (IKK) core complex consisting of CHUK, IKBKB and IKBKG; probably four alpha/CHUK-beta/IKBKB dimers are associated with four gamma/IKBKG subunits. The IKK core complex seems to associate with regulatory or adapter proteins to form a IKK-signalosome holo-complex. The IKK complex associates with TERF2IP/RAP1, leading to promote IKK-mediated phosphorylation of RELA/p65. Part of a complex composed of NCOA2, NCOA3, CHUK/IKKA, IKBKB, IKBKG and CREBBP. Part of a 70-90 kDa complex at least consisting of CHUK/IKKA, IKBKB, NFKBIA, RELA, ELP1 and MAP3K14. Directly interacts with TRPC4AP. May interact with TRAF2. Interacts with NALP2. May interact with MAVS/IPS1. Interacts with ARRB1 and ARRB2. Interacts with NLRC5; prevents CHUK phosphorylation and kinase activity. Interacts with PIAS1; this interaction induces PIAS1 phosphorylation. Interacts with ZNF268 isoform 2; the interaction is further increased in a TNF-alpha-dependent manner. Interacts with LRRC14. Interacts with SASH1. Directly interacts with DDX3X after the physiological activation of the TLR7 and TLR8 pathways; this interaction enhances CHUK autophosphorylation. Post-translationally, ubiquitinated by TRIM56 via 'Lys-63'-linked ubiquitination, promoting activation of CHUK/IKKA. In terms of processing, phosphorylated by MAP3K14/NIK, AKT and to a lesser extent by MEKK1, and dephosphorylated by PP2A. Autophosphorylated. In terms of tissue distribution, ubiquitous only for isoform 1, isoforms 2 and 3 are expressed predominantly in brain and T-lymphocytes.

Its subcellular location is the cytoplasm. The protein resides in the nucleus. The catalysed reaction is L-seryl-[I-kappa-B protein] + ATP = O-phospho-L-seryl-[I-kappa-B protein] + ADP + H(+). With respect to regulation, activated when phosphorylated and inactivated when dephosphorylated. Serine kinase that plays an essential role in the NF-kappa-B signaling pathway which is activated by multiple stimuli such as inflammatory cytokines, bacterial or viral products, DNA damages or other cellular stresses. Acts as a part of the canonical IKK complex in the conventional pathway of NF-kappa-B activation and phosphorylates inhibitors of NF-kappa-B on serine residues. These modifications allow polyubiquitination of the inhibitors and subsequent degradation by the proteasome. In turn, free NF-kappa-B is translocated into the nucleus and activates the transcription of hundreds of genes involved in immune response, growth control, or protection against apoptosis. Negatively regulates the pathway by phosphorylating the scaffold protein TAXBP1 and thus promoting the assembly of the A20/TNFAIP3 ubiquitin-editing complex (composed of A20/TNFAIP3, TAX1BP1, and the E3 ligases ITCH and RNF11). Therefore, CHUK plays a key role in the negative feedback of NF-kappa-B canonical signaling to limit inflammatory gene activation. As part of the non-canonical pathway of NF-kappa-B activation, the MAP3K14-activated CHUK/IKKA homodimer phosphorylates NFKB2/p100 associated with RelB, inducing its proteolytic processing to NFKB2/p52 and the formation of NF-kappa-B RelB-p52 complexes. In turn, these complexes regulate genes encoding molecules involved in B-cell survival and lymphoid organogenesis. Also participates in the negative feedback of the non-canonical NF-kappa-B signaling pathway by phosphorylating and destabilizing MAP3K14/NIK. Within the nucleus, phosphorylates CREBBP and consequently increases both its transcriptional and histone acetyltransferase activities. Modulates chromatin accessibility at NF-kappa-B-responsive promoters by phosphorylating histones H3 at 'Ser-10' that are subsequently acetylated at 'Lys-14' by CREBBP. Additionally, phosphorylates the CREBBP-interacting protein NCOA3. Also phosphorylates FOXO3 and may regulate this pro-apoptotic transcription factor. Phosphorylates RIPK1 at 'Ser-25' which represses its kinase activity and consequently prevents TNF-mediated RIPK1-dependent cell death. Phosphorylates AMBRA1 following mitophagy induction, promoting AMBRA1 interaction with ATG8 family proteins and its mitophagic activity. This is Inhibitor of nuclear factor kappa-B kinase subunit alpha (Chuk) from Mus musculus (Mouse).